The following is a 93-amino-acid chain: Alpha-elapitoxin-Oh3a (93 aa).

Residues 1-21 form the signal peptide; sequence MKTLLLTLVVVTIVCLDLGYT. 5 disulfide bridges follow: Cys24–Cys42, Cys35–Cys63, Cys48–Cys52, Cys67–Cys78, and Cys79–Cys84.

The protein belongs to the three-finger toxin family. Long-chain subfamily. Type II alpha-neurotoxin sub-subfamily. As to expression, expressed by the venom gland.

The protein localises to the secreted. In terms of biological role, binds to muscular and neuronal nicotinic acetylcholine receptor (nAChR) and inhibits acetylcholine from binding to the receptor, thereby impairing neuromuscular and neuronal transmission. Pseudo-irreversibly inhibits twitches in chick biventer cervicis nerve-muscle preparations in a concentration-dependent manner. The protein is Alpha-elapitoxin-Oh3a of Ophiophagus hannah (King cobra).